The primary structure comprises 365 residues: Phospho-N-acetylmuramoyl-pentapeptide-transferase (365 aa).

A run of 9 helical transmembrane segments spans residues 47–67 (LLALGLGFSLAAIAGYWVVPL), 92–112 (PTMGGIFAIPAGLLPALILAG), 114–134 (SPLVWALAFVTLAYATIGWLD), 153–173 (LCLQFGAAFLFCLWLISQQGW), 180–200 (ITLPFGWSLALSLLFWPLAVF), 215–235 (LDGLAGGTGAAVLAGLGLWLA), 239–259 (PAIATFCCSLAGGFLGFLLHN), 281–301 (AIAIVANCLWVLLVMGGLFVL), and 344–364 (TQVVASFYGLTLLLIASCWLL).

This sequence belongs to the glycosyltransferase 4 family. MraY subfamily. Mg(2+) serves as cofactor.

The protein localises to the cell inner membrane. It carries out the reaction UDP-N-acetyl-alpha-D-muramoyl-L-alanyl-gamma-D-glutamyl-meso-2,6-diaminopimeloyl-D-alanyl-D-alanine + di-trans,octa-cis-undecaprenyl phosphate = di-trans,octa-cis-undecaprenyl diphospho-N-acetyl-alpha-D-muramoyl-L-alanyl-D-glutamyl-meso-2,6-diaminopimeloyl-D-alanyl-D-alanine + UMP. Its pathway is cell wall biogenesis; peptidoglycan biosynthesis. Its function is as follows. Catalyzes the initial step of the lipid cycle reactions in the biosynthesis of the cell wall peptidoglycan: transfers peptidoglycan precursor phospho-MurNAc-pentapeptide from UDP-MurNAc-pentapeptide onto the lipid carrier undecaprenyl phosphate, yielding undecaprenyl-pyrophosphoryl-MurNAc-pentapeptide, known as lipid I. This chain is Phospho-N-acetylmuramoyl-pentapeptide-transferase, found in Synechococcus elongatus (strain ATCC 33912 / PCC 7942 / FACHB-805) (Anacystis nidulans R2).